A 267-amino-acid chain; its full sequence is Shikimate dehydrogenase (NADP(+)) (267 aa).

Residues 14–16 (SLS) and Thr61 contribute to the shikimate site. The Proton acceptor role is filled by Lys65. Shikimate is bound by residues Asn86 and Asp101. Residues 126–130 (GAGGA), 150–155 (NRTHSK), and Leu213 each bind NADP(+). Tyr215 provides a ligand contact to shikimate. Gly236 lines the NADP(+) pocket.

Belongs to the shikimate dehydrogenase family. As to quaternary structure, homodimer.

The catalysed reaction is shikimate + NADP(+) = 3-dehydroshikimate + NADPH + H(+). The protein operates within metabolic intermediate biosynthesis; chorismate biosynthesis; chorismate from D-erythrose 4-phosphate and phosphoenolpyruvate: step 4/7. Its function is as follows. Involved in the biosynthesis of the chorismate, which leads to the biosynthesis of aromatic amino acids. Catalyzes the reversible NADPH linked reduction of 3-dehydroshikimate (DHSA) to yield shikimate (SA). This is Shikimate dehydrogenase (NADP(+)) from Vesicomyosocius okutanii subsp. Calyptogena okutanii (strain HA).